A 516-amino-acid chain; its full sequence is Putative Rieske 2Fe-2S iron-sulfur protein MT3926 (516 aa).

The Rieske domain maps to 429-516 (LYTFFKCLTD…RGHQLRSSRP (88 aa)). Positions 469, 471, 489, and 492 each coordinate [2Fe-2S] cluster.

The cofactor is [2Fe-2S] cluster.

The polypeptide is Putative Rieske 2Fe-2S iron-sulfur protein MT3926 (Mycobacterium tuberculosis (strain CDC 1551 / Oshkosh)).